A 156-amino-acid polypeptide reads, in one-letter code: Small ribosomal subunit protein uS7 (156 aa).

It belongs to the universal ribosomal protein uS7 family. In terms of assembly, part of the 30S ribosomal subunit. Contacts proteins S9 and S11.

One of the primary rRNA binding proteins, it binds directly to 16S rRNA where it nucleates assembly of the head domain of the 30S subunit. Is located at the subunit interface close to the decoding center, probably blocks exit of the E-site tRNA. The sequence is that of Small ribosomal subunit protein uS7 from Azorhizobium caulinodans (strain ATCC 43989 / DSM 5975 / JCM 20966 / LMG 6465 / NBRC 14845 / NCIMB 13405 / ORS 571).